The primary structure comprises 651 residues: E3 SUMO-protein ligase PIAS1 (651 aa).

N-acetylalanine is present on A2. The tract at residues 2-200 (ADSAELKQMV…KCDFTVQVQL (199 aa)) is required for interaction with MSX1. One can recognise an SAP domain in the interval 11–45 (VMSLRVSELQVLLGYAGRNKHGRKHELLTKALHLL). The short motif at 19 to 23 (LQVLL) is the LXXLL motif element. Residues K40 and K46 each participate in a glycyl lysine isopeptide (Lys-Gly) (interchain with G-Cter in SUMO2) cross-link. Positions 56 to 64 (KIKELYRRR) match the Nuclear localization signal motif. Positions 124-288 (HLTSALHPVH…SMAVYLVKQL (165 aa)) constitute a PINIT domain. Glycyl lysine isopeptide (Lys-Gly) (interchain with G-Cter in SUMO2) cross-links involve residues K137 and K238. The segment at 320-405 (PDSEIATTSL…LKYCTDCDEI (86 aa)) adopts an SP-RING-type zinc-finger fold. Zn(2+)-binding residues include C351, H353, C374, and C377. The Nuclear localization signal signature appears at 368-380 (KKPTWVCPVCDKK). K453 is covalently cross-linked (Glycyl lysine isopeptide (Lys-Gly) (interchain with G-Cter in SUMO2)). An SUMO1-binding region spans residues 462-473 (LTIDSSSDEEEE). The tract at residues 465–511 (DSSSDEEEEEPSAKRTCPSLSPTSPLNNKGILSLPHQASPVSRTPSL) is disordered. Phosphoserine occurs at positions 467, 468, 483, and 485. The span at 482-491 (PSLSPTSPLN) shows a compositional bias: polar residues. T487 is subject to Phosphothreonine. S488 carries the post-translational modification Phosphoserine. Residue K493 forms a Glycyl lysine isopeptide (Lys-Gly) (interchain with G-Cter in SUMO2) linkage. Phosphoserine occurs at positions 503, 510, and 522. Repeat copies occupy residues 520 to 523 (NTSL) and 557 to 560 (NTSL). Residues 520 to 615 (NTSLIQDYRH…GSSSGSNSSL (96 aa)) form a 4 X 4 AA repeats of N-T-S-L region. Residues 598-601 (STSL) form a 3; approximate repeat. Over residues 599-621 (TSLPTTNGSSSGSNSSLVSSNSL) the composition is skewed to low complexity. The interval 599-632 (TSLPTTNGSSSGSNSSLVSSNSLRESHSHTVTNR) is disordered. A 4; approximate repeat occupies 612 to 615 (NSSL).

This sequence belongs to the PIAS family. In terms of assembly, interacts with NCOA2 and AR. Interacts with NR2C1; the interaction promotes its sumoylation. Interacts with DDX21, CSRP2, AXIN1, JUN, UBE2I, SUMO1, SATB2, PLAG1, TP53 and STAT1 (dimer), following IFNA1-stimulation. Interacts with SP3 (preferentially when SUMO-modified). Interacts with KLF8; the interaction results in SUMO ligation and repression of KLF8 transcriptional activity and of its cell cycle progression into G(1) phase. Interacts with CHUK/IKKA; this interaction induces PIAS1 phosphorylation. Interacts with PTK2/FAK1; the interaction promotes its sumoylation. Interacts with DDX5. Interacts with PML. Interacts with MTA1. Interacts with SUMO1P1/SUMO5. Interacts with PRDM1/Blimp-1. Interacts (via N-terminus) with MSX1 (via C-terminus); the interaction is required for the localization of both proteins to the nuclear periphery and specific binding of MSX1 to the core enhancer region in target gene promoters. (Microbial infection) Interacts with ebolavirus VP35; this interaction mediates the sumoylation of IRF7 and contributes to the viral inhibition of IFN-type I production. In terms of processing, sumoylated. As to expression, expressed in numerous tissues with highest level in testis.

Its subcellular location is the nucleus. The protein resides in the nucleus speckle. The protein localises to the PML body. It is found in the cytoplasm. It localises to the cytoskeleton. It functions in the pathway protein modification; protein sumoylation. Its function is as follows. Functions as an E3-type small ubiquitin-like modifier (SUMO) ligase, stabilizing the interaction between UBE2I and the substrate, and as a SUMO-tethering factor. Catalyzes sumoylation of various proteins, such as CEBPB, MRE11, MTA1, PTK2 and PML. Plays a crucial role as a transcriptional coregulation in various cellular pathways, including the STAT pathway, the p53 pathway and the steroid hormone signaling pathway. In vitro, binds A/T-rich DNA. The effects of this transcriptional coregulation, transactivation or silencing, may vary depending upon the biological context. Mediates sumoylation of MRE11, stabilizing MRE11 on chromatin during end resection. Sumoylates PML (at 'Lys-65' and 'Lys-160') and PML-RAR and promotes their ubiquitin-mediated degradation. PIAS1-mediated sumoylation of PML promotes its interaction with CSNK2A1/CK2 which in turn promotes PML phosphorylation and degradation. Enhances the sumoylation of MTA1 and may participate in its paralog-selective sumoylation. Plays a dynamic role in adipogenesis by promoting the SUMOylation and degradation of CEBPB. Mediates the nuclear mobility and localization of MSX1 to the nuclear periphery, whereby MSX1 is brought into the proximity of target myoblast differentiation factor genes. Also required for the binding of MSX1 to the core enhancer region in target gene promoter regions, independent of its sumoylation activity. Capable of binding to the core enhancer region TAAT box in the MYOD1 gene promoter. In terms of biological role, (Microbial infection) Restricts Epstein-Barr virus (EBV) lytic replication by acting as an inhibitor for transcription factors involved in lytic gene expression. The virus can use apoptotic caspases to antagonize PIAS1-mediated restriction and express its lytic genes. This Homo sapiens (Human) protein is E3 SUMO-protein ligase PIAS1 (PIAS1).